Consider the following 1120-residue polypeptide: Terminal uridylyltransferase 1 (1120 aa).

Disordered regions lie at residues 1 to 156 (MSKY…SAVE) and 196 to 221 (AALINGDPGPLSSAVSSSSSGSPHTP). Polar residues predominate over residues 7–16 (LFNQGTKDGT). Residues 17–59 (NASSGSEANSANITSSSAPASSTNTSSPTSSESAVVSPPASTS) are compositionally biased toward low complexity. Positions 60–70 (PRRRLIHRRHG) are enriched in basic residues. Over residues 90-103 (NEEKHENFISDSVH) the composition is skewed to basic and acidic residues. Residues 118–128 (LTTSGSETVMS) show a composition bias toward polar residues. 2 stretches are compositionally biased toward low complexity: residues 134-154 (AFEAPSPPTASASPPLESTSA) and 207-217 (SSAVSSSSSGS). A C2H2-type; atypical zinc finger spans residues 222-253 (PRLFTCDMCLQYVSTSYEALEQHALDQHGDAL). Positions 227, 230, 244, and 249 each coordinate Zn(2+). UTP-binding positions include Ser330 and 341–344 (SDID). The Mg(2+) site is built by Asp342 and Asp344. Residue Arg390 participates in RNA binding. Asp548 is a binding site for Mg(2+). UTP contacts are provided by residues 555–559 (GIRNS), Lys580, Lys584, and 598–599 (SY). The PAP-associated domain occupies 659–697 (GELLLGFFYYYAFEFDWVNHVVSLNRPGITTKASLGWDV). An important for catalytic activity and RNA binding region spans residues 750–1120 (GMMASSASAA…ARRVLRLLFR (371 aa)). A Nucleotide recognition motif (NRM) motif is present at residues 773-782 (IEDPYEENLN). The tract at residues 800 to 900 (YRGLLSLLKD…LLSDLEAAFL (101 aa)) is involved in oligomerization. The interval 1047-1076 (PSTTTQGEDPLASGTCEQGGVSPSLPTGAP) is disordered.

The protein belongs to the DNA polymerase type-B-like family. In terms of assembly, homotetramer. Part of a 700kDa complex. Interacts with p45 and p50 RNA ligases. Mg(2+) is required as a cofactor. Mn(2+) serves as cofactor.

The protein resides in the mitochondrion. The enzyme catalyses RNA(n) + UTP = RNA(n)-3'-uridine ribonucleotide + diphosphate. Its activity is regulated as follows. Zinc-binding is required for catalytic activity. Terminal uridylyltransferase which is involved in the post-transcriptional editing of mitochondrial RNA, a process involving the addition and deletion of uridine (U) nucleotides in the pre-mRNA. Specifically, catalyzes the addition of Us to the 3'-hydroxyl group of guided RNA (gRNA), with a preference for RNAs terminating in 6 Us, but also can add Us to RNAs terminating in 6 adenines (A), 6 cytosines (C), or 6 guanines (G). Can mediate RNA-independent UTP polymerization in vitro. Can mediate pyrophosphate-dependent degradation of synthetic RNA ending with U residues in vitro. This is Terminal uridylyltransferase 1 from Leishmania tarentolae (Sauroleishmania tarentolae).